Consider the following 444-residue polypeptide: Tryptophan 5-hydroxylase 1 (444 aa).

The ACT domain maps to T19–N94. S58 bears the Phosphoserine; by PKA mark. Positions 235, 257, and 265 each coordinate L-tryptophan. H272, H277, and E317 together coordinate Fe cation. L-tryptophan-binding residues include S336 and I366.

The protein belongs to the biopterin-dependent aromatic amino acid hydroxylase family. Homotetramer. Interacts with DNAJC12. Fe(2+) serves as cofactor. Post-translationally, ubiquitinated, leading to its degradation by the proteasome. Ubiquitinated is triggered by phosphorylation. In terms of processing, phosphorylated; triggering degradation by the proteasome.

The enzyme catalyses (6R)-L-erythro-5,6,7,8-tetrahydrobiopterin + L-tryptophan + O2 = 5-hydroxy-L-tryptophan + (4aS,6R)-4a-hydroxy-L-erythro-5,6,7,8-tetrahydrobiopterin. It functions in the pathway aromatic compound metabolism; serotonin biosynthesis; serotonin from L-tryptophan: step 1/2. Functionally, oxidizes L-tryptophan to 5-hydroxy-l-tryptophan in the rate-determining step of serotonin biosynthesis. In Oryctolagus cuniculus (Rabbit), this protein is Tryptophan 5-hydroxylase 1 (TPH1).